Reading from the N-terminus, the 151-residue chain is Globin (151 aa).

In terms of domain architecture, Globin spans serine 2–alanine 151. Histidine 100 contacts heme b.

It belongs to the globin family.

The polypeptide is Globin (Biomphalaria glabrata (Bloodfluke planorb)).